Consider the following 280-residue polypeptide: Tryptophan 2,3-dioxygenase (280 aa).

Substrate-binding positions include 47–51 (FVVQH), Tyr109, and Arg113. Residue His236 coordinates heme. Residue Thr250 participates in substrate binding.

This sequence belongs to the tryptophan 2,3-dioxygenase family. Homotetramer. Requires heme as cofactor.

The enzyme catalyses L-tryptophan + O2 = N-formyl-L-kynurenine. It functions in the pathway amino-acid degradation; L-tryptophan degradation via kynurenine pathway; L-kynurenine from L-tryptophan: step 1/2. Functionally, heme-dependent dioxygenase that catalyzes the oxidative cleavage of the L-tryptophan (L-Trp) pyrrole ring and converts L-tryptophan to N-formyl-L-kynurenine. Catalyzes the oxidative cleavage of the indole moiety. This is Tryptophan 2,3-dioxygenase from Serratia proteamaculans (strain 568).